Here is a 224-residue protein sequence, read N- to C-terminus: Ribonuclease HII (224 aa).

The region spanning 21-223 (RAIAGIDEAG…IRNAALEGEQ (203 aa)) is the RNase H type-2 domain. Residues Asp27, Glu28, and Asp124 each contribute to the a divalent metal cation site.

It belongs to the RNase HII family. Mn(2+) is required as a cofactor. Mg(2+) serves as cofactor.

The protein resides in the cytoplasm. The catalysed reaction is Endonucleolytic cleavage to 5'-phosphomonoester.. In terms of biological role, endonuclease that specifically degrades the RNA of RNA-DNA hybrids. In Roseiflexus castenholzii (strain DSM 13941 / HLO8), this protein is Ribonuclease HII.